A 486-amino-acid polypeptide reads, in one-letter code: Inosine-5'-monophosphate dehydrogenase (486 aa).

2 consecutive CBS domains span residues 99–154 (IVED…LVKE) and 156–215 (MTKE…VRDE). Residues D247 and 294 to 296 (GIG) contribute to the NAD(+) site. K(+) is bound by residues G296 and G298. S299 is an IMP binding site. Position 301 (C301) interacts with K(+). C301 acts as the Thioimidate intermediate in catalysis. IMP-binding positions include 334–336 (DGG), 357–358 (GN), and 381–385 (YRGMG). The active-site Proton acceptor is R397. E412 provides a ligand contact to IMP. 3 residues coordinate K(+): E466, S467, and H468.

It belongs to the IMPDH/GMPR family. As to quaternary structure, homotetramer. The cofactor is K(+).

The catalysed reaction is IMP + NAD(+) + H2O = XMP + NADH + H(+). It functions in the pathway purine metabolism; XMP biosynthesis via de novo pathway; XMP from IMP: step 1/1. Mycophenolic acid (MPA) is a non-competitive inhibitor that prevents formation of the closed enzyme conformation by binding to the same site as the amobile flap. In contrast, mizoribine monophosphate (MZP) is a competitive inhibitor that induces the closed conformation. MPA is a potent inhibitor of mammalian IMPDHs but a poor inhibitor of the bacterial enzymes. MZP is a more potent inhibitor of bacterial IMPDH. Its function is as follows. Catalyzes the conversion of inosine 5'-phosphate (IMP) to xanthosine 5'-phosphate (XMP), the first committed and rate-limiting step in the de novo synthesis of guanine nucleotides, and therefore plays an important role in the regulation of cell growth. This chain is Inosine-5'-monophosphate dehydrogenase, found in Pyrococcus horikoshii (strain ATCC 700860 / DSM 12428 / JCM 9974 / NBRC 100139 / OT-3).